Here is a 218-residue protein sequence, read N- to C-terminus: N-(5'-phosphoribosyl)anthranilate isomerase (218 aa).

It belongs to the TrpF family.

The catalysed reaction is N-(5-phospho-beta-D-ribosyl)anthranilate = 1-(2-carboxyphenylamino)-1-deoxy-D-ribulose 5-phosphate. It participates in amino-acid biosynthesis; L-tryptophan biosynthesis; L-tryptophan from chorismate: step 3/5. This is N-(5'-phosphoribosyl)anthranilate isomerase from Bordetella pertussis (strain Tohama I / ATCC BAA-589 / NCTC 13251).